The chain runs to 444 residues: MKKLYIRTFGCQMNEYDSNKIADVLNHSHGLVLTDDAASANVLLLNTCSIREKAQEKLFHQLGRWRKLKDKNSNLIIGVGGCVASQEGELILERAPYVDIIFGPQTLHRLPSMLNEVLTPTPGMSVKPSIDISFPEIEKFDHLPKPKTSSVTAFVSIMEGCSKYCTFCIVPYTRGEEVSRPFIDVINEVKILAIQGVREVNLLGQNVNAYQGLMDDGEIADLALLINIAAQIDGIKRIRYTTSHPTQFSDSLIEAYMEVPKLASHLHLPIQSGSDKILRLMKRGHMVIEYKSKIRKLRKIRPDISISSDFIIGFPGENEQDFLDTMTLIDEIGFDKSFSFIYSARPGTLASSYLDDVDMDVKKQRLALVQKTIDKNTERISKSMVGSVQKILVENVAKKRDNLFGRTENMRNTHFKGDKSLIGQIVNIKITQGRGNSLVGNLIA.

The MTTase N-terminal domain maps to 2–119 (KKLYIRTFGC…LPSMLNEVLT (118 aa)). The [4Fe-4S] cluster site is built by Cys11, Cys48, Cys82, Cys161, Cys165, and Cys168. The Radical SAM core domain maps to 147–379 (KTSSVTAFVS…QKTIDKNTER (233 aa)). The TRAM domain maps to 382-444 (KSMVGSVQKI…GNSLVGNLIA (63 aa)).

Belongs to the methylthiotransferase family. MiaB subfamily. Monomer. [4Fe-4S] cluster serves as cofactor.

It localises to the cytoplasm. The catalysed reaction is N(6)-dimethylallyladenosine(37) in tRNA + (sulfur carrier)-SH + AH2 + 2 S-adenosyl-L-methionine = 2-methylsulfanyl-N(6)-dimethylallyladenosine(37) in tRNA + (sulfur carrier)-H + 5'-deoxyadenosine + L-methionine + A + S-adenosyl-L-homocysteine + 2 H(+). In terms of biological role, catalyzes the methylthiolation of N6-(dimethylallyl)adenosine (i(6)A), leading to the formation of 2-methylthio-N6-(dimethylallyl)adenosine (ms(2)i(6)A) at position 37 in tRNAs that read codons beginning with uridine. This Ruthia magnifica subsp. Calyptogena magnifica protein is tRNA-2-methylthio-N(6)-dimethylallyladenosine synthase.